Here is a 258-residue protein sequence, read N- to C-terminus: 5'-nucleotidase SurE (258 aa).

A divalent metal cation is bound by residues aspartate 16, aspartate 17, serine 47, and asparagine 99.

It belongs to the SurE nucleotidase family. Requires a divalent metal cation as cofactor.

The protein localises to the cytoplasm. The catalysed reaction is a ribonucleoside 5'-phosphate + H2O = a ribonucleoside + phosphate. Nucleotidase that shows phosphatase activity on nucleoside 5'-monophosphates. The sequence is that of 5'-nucleotidase SurE from Coxiella burnetii (strain CbuK_Q154) (Coxiella burnetii (strain Q154)).